We begin with the raw amino-acid sequence, 360 residues long: Mannose-1-phosphate guanylyltransferase catalytic subunit beta (360 aa).

The segment at 2–222 (KALILVGGYG…QGFWMDIGQP (221 aa)) is substrate-binding domain. Aspartate 110 is a binding site for GDP-alpha-D-mannose. Aspartate 110 lines the Mg(2+) pocket. Lysine 162 is a catalytic residue. Residue aspartate 218 participates in GDP-alpha-D-mannose binding. A Mg(2+)-binding site is contributed by aspartate 218. The tract at residues 245–360 (HVGPGFIGNV…ESVPEPRIIM (116 aa)) is hexapeptide repeat domain.

It belongs to the transferase hexapeptide repeat family. As to quaternary structure, component of the GMPPA-GMPPB mannose-1-phosphate guanylyltransferase complex composed of 4 gmppa subunits and 8 gmppb subunits; the complex is organized into three layers, a central layer made up of 2 gmppa dimers sandwiched between two layers each made up of 2 gmppb dimers. Catalytic activity of gmppb is reduced when part of the complex and binding of GDP-alpha-D-Mannose by gmppa induces allosteric feedback inhibition of gmppb. Requires Mg(2+) as cofactor.

It carries out the reaction alpha-D-mannose 1-phosphate + GTP + H(+) = GDP-alpha-D-mannose + diphosphate. The protein operates within nucleotide-sugar biosynthesis; GDP-alpha-D-mannose biosynthesis; GDP-alpha-D-mannose from alpha-D-mannose 1-phosphate (GTP route): step 1/1. Its activity is regulated as follows. Enzyme activity is reduced by incorporation into the GMPPA-GMPPB mannose-1-phosphate guanylyltransferase complex. Allosterically inhibited, when part of the GMPPA-GMPPB complex, by GDP-alpha-D-mannose binding to GMPPA. In terms of biological role, catalytic subunit of the GMPPA-GMPPB mannose-1-phosphate guanylyltransferase complex. Catalyzes the formation of GDP-mannose, an essential precursor of glycan moieties of glycoproteins and glycolipids. Can catalyze the reverse reaction in vitro. Together with GMPPA regulates GDP-alpha-D-mannose levels. The polypeptide is Mannose-1-phosphate guanylyltransferase catalytic subunit beta (gmppb) (Xenopus tropicalis (Western clawed frog)).